A 77-amino-acid chain; its full sequence is Acyl carrier protein (77 aa).

In terms of domain architecture, Carrier spans 1–76 (MAVFDDVRDV…DVVNYIEKLG (76 aa)). O-(pantetheine 4'-phosphoryl)serine is present on Ser-36.

The protein belongs to the acyl carrier protein (ACP) family. Post-translationally, 4'-phosphopantetheine is transferred from CoA to a specific serine of apo-ACP by AcpS. This modification is essential for activity because fatty acids are bound in thioester linkage to the sulfhydryl of the prosthetic group.

Its subcellular location is the cytoplasm. It functions in the pathway lipid metabolism; fatty acid biosynthesis. In terms of biological role, carrier of the growing fatty acid chain in fatty acid biosynthesis. In Campylobacter curvus (strain 525.92), this protein is Acyl carrier protein.